The sequence spans 572 residues: Sulfite reductase [NADPH] hemoprotein beta-component (572 aa).

The [4Fe-4S] cluster site is built by C437, C443, C482, and C486. Position 486 (C486) interacts with siroheme.

This sequence belongs to the nitrite and sulfite reductase 4Fe-4S domain family. In terms of assembly, alpha(8)-beta(8). The alpha component is a flavoprotein, the beta component is a hemoprotein. It depends on siroheme as a cofactor. [4Fe-4S] cluster serves as cofactor.

The enzyme catalyses hydrogen sulfide + 3 NADP(+) + 3 H2O = sulfite + 3 NADPH + 4 H(+). The protein operates within sulfur metabolism; hydrogen sulfide biosynthesis; hydrogen sulfide from sulfite (NADPH route): step 1/1. Functionally, component of the sulfite reductase complex that catalyzes the 6-electron reduction of sulfite to sulfide. This is one of several activities required for the biosynthesis of L-cysteine from sulfate. In Lysinibacillus sphaericus (strain C3-41), this protein is Sulfite reductase [NADPH] hemoprotein beta-component.